Consider the following 356-residue polypeptide: Metacaspase-1 (356 aa).

The tract at residues 1–47 is disordered; the sequence is MYSGRSGAPPPAHSPYPNSYNHGPPGHSAGHNVPPPPPTQPVQFGHG. Residues histidine 147 and cysteine 203 contribute to the active site.

The protein belongs to the peptidase C14B family.

In terms of biological role, involved in cell death (apoptosis). This is Metacaspase-1 (MCA1) from Ajellomyces capsulatus (strain NAm1 / WU24) (Darling's disease fungus).